Reading from the N-terminus, the 82-residue chain is Small ribosomal subunit protein uS17 (82 aa).

This sequence belongs to the universal ribosomal protein uS17 family. As to quaternary structure, part of the 30S ribosomal subunit.

One of the primary rRNA binding proteins, it binds specifically to the 5'-end of 16S ribosomal RNA. The protein is Small ribosomal subunit protein uS17 of Synechococcus elongatus (strain ATCC 33912 / PCC 7942 / FACHB-805) (Anacystis nidulans R2).